The following is an 889-amino-acid chain: Alanine--tRNA ligase (889 aa).

Zn(2+) contacts are provided by His-587, His-591, Cys-691, and His-695. Disordered stretches follow at residues 734–760 (QQEQESKRKAEEAVAKEQLEKQREENK) and 866–889 (AQGGGKDTSKKDEAISKAKSMILG). Residues 872–881 (DTSKKDEAIS) are compositionally biased toward basic and acidic residues.

This sequence belongs to the class-II aminoacyl-tRNA synthetase family. The cofactor is Zn(2+).

Its subcellular location is the cytoplasm. It catalyses the reaction tRNA(Ala) + L-alanine + ATP = L-alanyl-tRNA(Ala) + AMP + diphosphate. Catalyzes the attachment of alanine to tRNA(Ala) in a two-step reaction: alanine is first activated by ATP to form Ala-AMP and then transferred to the acceptor end of tRNA(Ala). Also edits incorrectly charged Ser-tRNA(Ala) and Gly-tRNA(Ala) via its editing domain. The sequence is that of Alanine--tRNA ligase from Nitrosopumilus maritimus (strain SCM1).